Reading from the N-terminus, the 524-residue chain is RNA-directed RNA polymerase (524 aa).

Residues 220–340 enclose the RdRp catalytic domain; that stretch reads QSIAQIDFSS…NFETALCRQE (121 aa).

It carries out the reaction RNA(n) + a ribonucleoside 5'-triphosphate = RNA(n+1) + diphosphate. Its function is as follows. RNA-dependent RNA polymerase which replicates the viral genome. The chain is RNA-directed RNA polymerase from Cryptosporidium parvum.